We begin with the raw amino-acid sequence, 184 residues long: Holliday junction branch migration complex subunit RuvA (184 aa).

Positions 1–64 (MIKAIEGIIT…EDANLLYGFI (64 aa)) are domain I. Residues 65-137 (KESEQRIFEM…LSDAKFGEIN (73 aa)) are domain II. Asn137 is a region of interest (flexible linker). The segment at 138 to 184 (SMPSYQNEAFMALESLGFKRDRISKVLNECSSNDTASLIKEALKKLA) is domain III.

It belongs to the RuvA family. Homotetramer. Forms an RuvA(8)-RuvB(12)-Holliday junction (HJ) complex. HJ DNA is sandwiched between 2 RuvA tetramers; dsDNA enters through RuvA and exits via RuvB. An RuvB hexamer assembles on each DNA strand where it exits the tetramer. Each RuvB hexamer is contacted by two RuvA subunits (via domain III) on 2 adjacent RuvB subunits; this complex drives branch migration. In the full resolvosome a probable DNA-RuvA(4)-RuvB(12)-RuvC(2) complex forms which resolves the HJ.

It localises to the cytoplasm. In terms of biological role, the RuvA-RuvB-RuvC complex processes Holliday junction (HJ) DNA during genetic recombination and DNA repair, while the RuvA-RuvB complex plays an important role in the rescue of blocked DNA replication forks via replication fork reversal (RFR). RuvA specifically binds to HJ cruciform DNA, conferring on it an open structure. The RuvB hexamer acts as an ATP-dependent pump, pulling dsDNA into and through the RuvAB complex. HJ branch migration allows RuvC to scan DNA until it finds its consensus sequence, where it cleaves and resolves the cruciform DNA. In Campylobacter fetus subsp. fetus (strain 82-40), this protein is Holliday junction branch migration complex subunit RuvA.